A 696-amino-acid chain; its full sequence is Translation factor waclaw, mitochondrial (696 aa).

Residues Met1 to Lys76 constitute a mitochondrion transit peptide. The tr-type G domain occupies Glu97 to Gln278. Residues Ala106–Ser113, Asp171–His175, and Asn225–Asp228 each bind GTP.

This sequence belongs to the TRAFAC class translation factor GTPase superfamily. Classic translation factor GTPase family. LepA subfamily.

Its subcellular location is the mitochondrion inner membrane. The enzyme catalyses GTP + H2O = GDP + phosphate + H(+). Promotes mitochondrial protein synthesis. May act as a fidelity factor of the translation reaction, by catalyzing a one-codon backward translocation of tRNAs on improperly translocated ribosomes. Binds to mitochondrial ribosomes in a GTP-dependent manner. The chain is Translation factor waclaw, mitochondrial from Drosophila melanogaster (Fruit fly).